Reading from the N-terminus, the 206-residue chain is Glycerol-3-phosphate acyltransferase 1 (206 aa).

5 consecutive transmembrane segments (helical) span residues 14 to 34 (IALAAAIIGYLFGSIPFGLIL), 67 to 87 (ATLLLDALKASAAAWVVSYFL), 91 to 111 (AAIIAGFFAFIGHLFPVWIGF), 124 to 144 (LLGVAPIMVVLFAAVWLAVAF), and 148 to 168 (YSSLSALVAMLVIPVALWILG).

It belongs to the PlsY family. Probably interacts with PlsX.

It localises to the cell inner membrane. It catalyses the reaction an acyl phosphate + sn-glycerol 3-phosphate = a 1-acyl-sn-glycero-3-phosphate + phosphate. It participates in lipid metabolism; phospholipid metabolism. Its function is as follows. Catalyzes the transfer of an acyl group from acyl-phosphate (acyl-PO(4)) to glycerol-3-phosphate (G3P) to form lysophosphatidic acid (LPA). This enzyme utilizes acyl-phosphate as fatty acyl donor, but not acyl-CoA or acyl-ACP. The polypeptide is Glycerol-3-phosphate acyltransferase 1 (Rhizobium johnstonii (strain DSM 114642 / LMG 32736 / 3841) (Rhizobium leguminosarum bv. viciae)).